Reading from the N-terminus, the 227-residue chain is NADH-quinone oxidoreductase subunit C (227 aa).

The protein belongs to the complex I 30 kDa subunit family. As to quaternary structure, NDH-1 is composed of 14 different subunits. Subunits NuoB, C, D, E, F, and G constitute the peripheral sector of the complex.

The protein resides in the cell inner membrane. It carries out the reaction a quinone + NADH + 5 H(+)(in) = a quinol + NAD(+) + 4 H(+)(out). NDH-1 shuttles electrons from NADH, via FMN and iron-sulfur (Fe-S) centers, to quinones in the respiratory chain. The immediate electron acceptor for the enzyme in this species is believed to be ubiquinone. Couples the redox reaction to proton translocation (for every two electrons transferred, four hydrogen ions are translocated across the cytoplasmic membrane), and thus conserves the redox energy in a proton gradient. The chain is NADH-quinone oxidoreductase subunit C from Legionella pneumophila (strain Lens).